Here is a 346-residue protein sequence, read N- to C-terminus: PPE family protein PPE17 (346 aa).

Residues 6-159 (FPPEFNSLNI…LYATMAAAAA (154 aa)) are PPE.

The protein belongs to the mycobacterial PPE family. Interacts with LRR motifs 15-20 of host Toll-like receptor 2 (TLR2).

It is found in the secreted. It localises to the cell wall. The protein resides in the cell surface. Its function is as follows. Induces pro-inflammatory responses. Induces host TLR1/2 heterodimerization, which causes an increased recruitment of IRAK1, MYD88, and protein kinase C epsilon (PRKCE) to the downstream TLR-signaling complex that translocates PRKCE into the nucleus in an IRAK1-dependent manner. PRKCE-mediated phosphorylation allowed the nuclear IRAK3 to be exported to the cytoplasm, leading to increased activation of ERK1/2, stabilization of MAPK phosphatase 1 (MKP1), and induction of TNF-alpha with concomitant down-regulation of MAP kinase p38. Functionally, during M.tuberculosis and HIV-1 co-infection, can stimulate transcription from the long terminal repeat (LTR) of HIV-1 in monocyte/macrophage cells. Interaction with human TLR2 activates the NF-kappa-B transcription factor, which binds to the promoter region of the HIV-1 and induces HIV-1 gene expression. The chain is PPE family protein PPE17 (PPE17) from Mycobacterium tuberculosis (strain ATCC 25618 / H37Rv).